The primary structure comprises 134 residues: DNA-binding protein inhibitor ID-2 (134 aa).

The disordered stretch occupies residues 1-24; it reads MKAFSPVRSVRKNSLSDHGLGISR. Residues Ser-14 and Ser-25 each carry the phosphoserine modification. Residues 23 to 75 form the bHLH domain; the sequence is SRSKTPVDDPMSLLYNMNDCYSKLKELVPSIPQNKKVSKMEILQHVIDYILDL. The Nuclear export signal signature appears at 106–115; the sequence is LNTDISILSL.

Interacts with GATA4 and NKX2-5. Interacts with NR0B2. Interacts with CLOCK and BMAL1. Interacts with IFI204. Interacts with NEDD9/HEF1. Interacts with ASB4; this interaction promotes ID2 proteasomal degradation. In terms of processing, ubiquitinated in a ASB4-depedent manner, leading to proteasomal degradation. Phosphorylated in vitro by CDK1, PKA and PKC.

The protein localises to the cytoplasm. The protein resides in the nucleus. In terms of biological role, transcriptional regulator (lacking a basic DNA binding domain) which negatively regulates the basic helix-loop-helix (bHLH) transcription factors by forming heterodimers and inhibiting their DNA binding and transcriptional activity. Implicated in regulating a variety of cellular processes, including cellular growth, senescence, differentiation, apoptosis, angiogenesis, and neoplastic transformation. Inhibits skeletal muscle and cardiac myocyte differentiation. Regulates the circadian clock by repressing the transcriptional activator activity of the CLOCK-BMAL1 heterodimer. Restricts the CLOCK and BMAL1 localization to the cytoplasm. Plays a role in both the input and output pathways of the circadian clock: in the input component, is involved in modulating the magnitude of photic entrainment and in the output component, contributes to the regulation of a variety of liver clock-controlled genes involved in lipid metabolism. The sequence is that of DNA-binding protein inhibitor ID-2 (ID2) from Bos taurus (Bovine).